The primary structure comprises 755 residues: Transcription factor kayak, isoforms A/B/F (755 aa).

Composition is skewed to low complexity over residues 23–66 (FAQQ…LPTQ) and 149–159 (QQHYPSESQSS). Disordered regions lie at residues 23-75 (FAQQ…SQSV), 149-168 (QQHYPSESQSSASGWNPETP), 316-350 (LGQGSESEDSNASYNDTQMNEEQDTTDTSSAHTDS), and 383-440 (GSAS…KRRV). Polar residues predominate over residues 316-333 (LGQGSESEDSNASYNDTQ). 2 stretches are compositionally biased toward low complexity: residues 341–350 (TDTSSAHTDS) and 383–397 (GSASVGSSNANTSNT). The bZIP domain maps to 418 to 481 (EQKRAVRRER…NQLEYLLATH (64 aa)). Residues 420 to 439 (KRAVRRERNKQAAARCRKRR) form a basic motif region. A leucine-zipper region spans residues 446–453 (LTEEVEQL). The span at 510 to 531 (AGSSGSGASSHHNHNSNDSSNG) shows a compositional bias: low complexity. Disordered stretches follow at residues 510 to 552 (AGSS…PLDL) and 716 to 755 (DGGTGLTPVSGPLVPNSSSTNKHPLELPTPTAEPSKLVSL). Over residues 539 to 549 (TLNSTGRSNSP) the composition is skewed to polar residues. A Phosphoserine modification is found at S548.

It belongs to the bZIP family. Fos subfamily. In terms of assembly, homodimer. Heterodimer with Jra. The kay-Jra heterodimer binds more stably to the AP-1 site than either of the two proteins alone. Early expression in the embryo is mesodermal and some of this expression is localized to a region surrounding the cephalic furrow. Later in embryonic development expression is ectodermal, corresponding to muscle attachment sites. Also observed in part of the mid- and hindgut and in the anal pad.

The protein resides in the nucleus. In terms of biological role, developmentally regulated transcription factor AP-1 binds and recognizes the enhancer DNA sequence: 5'-TGA[CG]TCA-3'. May play a role in the function or determination of a particular subset of cells in the developing embryo. It is able to carry out its function either independently of or in conjunction with Jra. In Drosophila melanogaster (Fruit fly), this protein is Transcription factor kayak, isoforms A/B/F (kay).